A 305-amino-acid polypeptide reads, in one-letter code: Oxygen-dependent coproporphyrinogen-III oxidase (305 aa).

Ser98 provides a ligand contact to substrate. The a divalent metal cation site is built by His102 and His112. His112 functions as the Proton donor in the catalytic mechanism. 114–116 (NVR) provides a ligand contact to substrate. 2 residues coordinate a divalent metal cation: His151 and His181. Residues 246–281 (YVEFNLVYDRGTLFGLQSGGRTESILMSMPPLARWE) are important for dimerization. Residue 264–266 (GGR) coordinates substrate.

Belongs to the aerobic coproporphyrinogen-III oxidase family. In terms of assembly, homodimer. A divalent metal cation serves as cofactor.

Its subcellular location is the cytoplasm. It carries out the reaction coproporphyrinogen III + O2 + 2 H(+) = protoporphyrinogen IX + 2 CO2 + 2 H2O. It participates in porphyrin-containing compound metabolism; protoporphyrin-IX biosynthesis; protoporphyrinogen-IX from coproporphyrinogen-III (O2 route): step 1/1. Functionally, involved in the heme biosynthesis. Catalyzes the aerobic oxidative decarboxylation of propionate groups of rings A and B of coproporphyrinogen-III to yield the vinyl groups in protoporphyrinogen-IX. This is Oxygen-dependent coproporphyrinogen-III oxidase from Vibrio campbellii (strain ATCC BAA-1116).